A 677-amino-acid chain; its full sequence is Methionine--tRNA ligase (677 aa).

The 'HIGH' region signature appears at 15–25; it reads PYANGSIHLGH. 4 residues coordinate Zn(2+): Cys-146, Cys-149, Cys-159, and Cys-162. The 'KMSKS' region motif lies at 333–337; the sequence is KMSKS. ATP is bound at residue Lys-336. The tRNA-binding domain maps to 575–677; the sequence is DFAKIDLRVA…DGAKPGQQVK (103 aa).

This sequence belongs to the class-I aminoacyl-tRNA synthetase family. MetG type 1 subfamily. In terms of assembly, homodimer. Zn(2+) serves as cofactor.

Its subcellular location is the cytoplasm. It catalyses the reaction tRNA(Met) + L-methionine + ATP = L-methionyl-tRNA(Met) + AMP + diphosphate. In terms of biological role, is required not only for elongation of protein synthesis but also for the initiation of all mRNA translation through initiator tRNA(fMet) aminoacylation. This chain is Methionine--tRNA ligase, found in Salmonella paratyphi C (strain RKS4594).